The sequence spans 679 residues: DNA ligase (679 aa).

Residues 41–45, 90–91, and E120 contribute to the NAD(+) site; these read DSVYD and SL. K122 functions as the N6-AMP-lysine intermediate in the catalytic mechanism. NAD(+) is bound by residues R143, E177, K293, and K317. Zn(2+)-binding residues include C411, C414, C429, and C434. In terms of domain architecture, BRCT spans 597–679; the sequence is DSNSWFAGKR…SETMREDAQA (83 aa).

It belongs to the NAD-dependent DNA ligase family. LigA subfamily. It depends on Mg(2+) as a cofactor. The cofactor is Mn(2+).

It catalyses the reaction NAD(+) + (deoxyribonucleotide)n-3'-hydroxyl + 5'-phospho-(deoxyribonucleotide)m = (deoxyribonucleotide)n+m + AMP + beta-nicotinamide D-nucleotide.. In terms of biological role, DNA ligase that catalyzes the formation of phosphodiester linkages between 5'-phosphoryl and 3'-hydroxyl groups in double-stranded DNA using NAD as a coenzyme and as the energy source for the reaction. It is essential for DNA replication and repair of damaged DNA. This chain is DNA ligase, found in Lactiplantibacillus plantarum (strain ATCC BAA-793 / NCIMB 8826 / WCFS1) (Lactobacillus plantarum).